Reading from the N-terminus, the 778-residue chain is Endonuclease MutS2 (778 aa).

329–336 (GPNTGGKT) provides a ligand contact to ATP. Residues 703-778 (LDLRGKRYEE…GSGCTIVTFK (76 aa)) form the Smr domain.

This sequence belongs to the DNA mismatch repair MutS family. MutS2 subfamily. Homodimer. Binds to stalled ribosomes, contacting rRNA.

Functionally, endonuclease that is involved in the suppression of homologous recombination and thus may have a key role in the control of bacterial genetic diversity. In terms of biological role, acts as a ribosome collision sensor, splitting the ribosome into its 2 subunits. Detects stalled/collided 70S ribosomes which it binds and splits by an ATP-hydrolysis driven conformational change. Acts upstream of the ribosome quality control system (RQC), a ribosome-associated complex that mediates the extraction of incompletely synthesized nascent chains from stalled ribosomes and their subsequent degradation. Probably generates substrates for RQC. The polypeptide is Endonuclease MutS2 (Streptococcus suis (strain 98HAH33)).